The following is a 739-amino-acid chain: Catalase-peroxidase (739 aa).

The disordered stretch occupies residues 1–20 (MGSNECPYSRQNANIGGGGQ). Positions 94–217 (WHSAGTYRVF…LAASHMGLIY (124 aa)) form a cross-link, tryptophyl-tyrosyl-methioninium (Trp-Tyr) (with M-243). Histidine 95 acts as the Proton acceptor in catalysis. The segment at residues 217-243 (YVNPEGPNKNPDPVLAAKDIRITFGRM) is a cross-link (tryptophyl-tyrosyl-methioninium (Tyr-Met) (with W-94)). Position 258 (histidine 258) interacts with heme b.

The protein belongs to the peroxidase family. Peroxidase/catalase subfamily. Homodimer or homotetramer. It depends on heme b as a cofactor. Formation of the three residue Trp-Tyr-Met cross-link is important for the catalase, but not the peroxidase activity of the enzyme.

It localises to the cytoplasm. The enzyme catalyses H2O2 + AH2 = A + 2 H2O. It carries out the reaction 2 H2O2 = O2 + 2 H2O. Its function is as follows. Bifunctional enzyme with both catalase and broad-spectrum peroxidase activity. The sequence is that of Catalase-peroxidase from Emericella nidulans (strain FGSC A4 / ATCC 38163 / CBS 112.46 / NRRL 194 / M139) (Aspergillus nidulans).